The sequence spans 318 residues: METRYNLKSPAVKRLMKEAAELKDPTDHYHAQPLEDNLFEWHFTVRGPPDSDFDGGVYHGRIVLPPEYPMKPPSIILLTANGRFEVGKKICLSISGHHPETWQPSWSIRTALLAIIGFMPTKGEGAIGSLDYTPEERRALAKKSQDFCCEGCGSAMKDVLLPLKSGSGSSQADQEAKELARQISFKAEVNSSGKTIAESDLNQCFSLNDSQDDLPTTFQGATASTSYGAQNPSGAPLPQPTQPAPKNTSMSPRQRRAQQQSQRRPSTSPDVLQGQPPRAHHTEHGGSAMLIIILTLALAALIFRRIYLANEYIFDFEL.

Residues 1–282 lie on the Cytoplasmic side of the membrane; that stretch reads METRYNLKSP…QGQPPRAHHT (282 aa). The region spanning 10–168 is the UBC core domain; that stretch reads PAVKRLMKEA…VLLPLKSGSG (159 aa). Cys91 acts as the Glycyl thioester intermediate in catalysis. Ser184 is modified (phosphoserine). The span at 215–233 shows a compositional bias: polar residues; sequence PTTFQGATASTSYGAQNPS. Residues 215–283 are disordered; sequence PTTFQGATAS…GQPPRAHHTE (69 aa). The span at 249 to 269 shows a compositional bias: low complexity; the sequence is SMSPRQRRAQQQSQRRPSTSP. Ser266 and Ser268 each carry phosphoserine. A helical; Anchor for type IV membrane protein transmembrane segment spans residues 283-303; the sequence is EHGGSAMLIIILTLALAALIF. At 304–318 the chain is on the lumenal side; it reads RRIYLANEYIFDFEL.

Belongs to the ubiquitin-conjugating enzyme family. Component of the HRD1 complex, which comprises at least SYNV1/HRD1, DERL1/2, FAM8A1, HERPUD1/HERP, OS9, SEL1L and UBE2J1. Interacts with E3 ligase RNF26. Interacts with E3 ligase RNF133. Phosphorylated at Ser-184 in a cytosolic stress-dependent manner by MAP kinase p38 MAPKAPK2. Post-translationally, phosphorylated UBE2J1 is rapidly ubiquitinated and subsequently degraded by the proteasome.

Its subcellular location is the endoplasmic reticulum membrane. The catalysed reaction is S-ubiquitinyl-[E1 ubiquitin-activating enzyme]-L-cysteine + [E2 ubiquitin-conjugating enzyme]-L-cysteine = [E1 ubiquitin-activating enzyme]-L-cysteine + S-ubiquitinyl-[E2 ubiquitin-conjugating enzyme]-L-cysteine.. The protein operates within protein modification; protein ubiquitination. Functionally, catalyzes the covalent attachment of ubiquitin to other proteins. Functions in the selective degradation of misfolded membrane proteins from the endoplasmic reticulum (ERAD) and is essential for cells to recover from ER stress. Plays a role in MAPKAPK2-dependent translational control of TNF-alpha synthesis. Also acts as a platform for perinuclear positioning of the endosomal system by mediating ubiquitination of SQSTM1 through interaction with the E3 ubiquitin-protein ligase RNF26. Plays a role in male fecundity through the interaction with the E3 ubiquitin-protein ligase RNF133. In Mus musculus (Mouse), this protein is Ubiquitin-conjugating enzyme E2 J1 (Ube2j1).